The sequence spans 299 residues: Phosphatidylinositol-3-phosphatase (299 aa).

The first 43 residues, 1–43 (MLRGIQALSRPLTRVYRALAVIGVLAASLLASWVGAVPQVGLA), serve as a signal peptide directing secretion.

Monomer. SapM interacts with host RAB7 via its C-terminus. The cofactor is a metal cation.

Its subcellular location is the secreted. The protein localises to the host cytoplasmic vesicle. It is found in the host phagosome. It carries out the reaction a phosphate monoester + H2O = an alcohol + phosphate. It catalyses the reaction a 1,2-diacyl-sn-glycero-3-phospho-(1D-myo-inositol-3-phosphate) + H2O = a 1,2-diacyl-sn-glycero-3-phospho-(1D-myo-inositol) + phosphate. Phosphatase activity is inhibited in vitro by low concentrations of several heavy metals (zinc chloride, sodium molybdate, magnesium chloride, and copper sulfate) and moderately high concentrations (&gt;8 mM) of EDTA. Its function is as follows. Virulence factor that plays an important role in blocking phagosome-lysosome fusion and thus participates in the intracellular survival of the pathogen. Acts as a phosphatase that dephosphorylates phosphatidylinositol 3-phosphate (PI3P), a membrane trafficking regulatory lipid essential for phagosomal acquisition of lysosomal constituents. Therefore, SapM eliminates PI3P from the phagosomal membrane by catalyzing its hydrolysis, and thus contributes to inhibition of phagosome maturation. Also interferes with autophagy: SapM blocks autophagosome-lysosome fusion in macrophages by binding to the small GTPase RAB7, which prevents RAB7 from being involved in this process and thus negatively regulates autophagy flux. In vitro, displays phosphatase activity with broad specificity; can dephosphorylate a variety of phosphoester substrates, with the highest activity against phosphoenolpyruvate, glycerophosphate, GTP, NADPH, phosphotyrosine and trehalose-6-phosphate. In contrast, the enzyme exhibits poor activity against glucose-6-phosphate, phosphothreonine, and a number of nucleotides (NADP, ATP, AMP, and GMP). In Mycobacterium tuberculosis (strain ATCC 25618 / H37Rv), this protein is Phosphatidylinositol-3-phosphatase.